Consider the following 465-residue polypeptide: Hepatocyte nuclear factor 6 (465 aa).

Disordered regions lie at residues 17–55 (SHEP…SMGM), 120–141 (DKFP…HQRL), 264–290 (LLGT…GQME), and 442–465 (DKWQ…CTKA). Residues 123 to 140 (PHHHHHHHHHHHPHHHQR) show a composition bias toward basic residues. Positions 273–288 (PSVTGAQVSNGSNSGQ) are enriched in polar residues. A DNA-binding region (CUT) is located at residues 283–369 (GSNSGQMEEI…QRMSALRLAA (87 aa)). The segment at residues 385 to 444 (PKKPRLVFTDVQRRTLHAIFKENKRPSKELQITISQQLGLELSTVSNFFMNARRRSLDKW) is a DNA-binding region (homeobox). Residues 448–465 (GSSNSGNSSSSSSTCTKA) are compositionally biased toward low complexity.

The protein belongs to the CUT homeobox family. As to quaternary structure, binds DNA as a monomer. In terms of tissue distribution, highly expressed in liver; lower expression in testis and skin.

The protein resides in the nucleus. Functionally, transcriptional activator. Binds the consensus sequence 5'-DHWATTGAYTWWD-3' on a variety of gene promoters such as those of HNF3B and TTR. Important for liver genes transcription. The polypeptide is Hepatocyte nuclear factor 6 (ONECUT1) (Homo sapiens (Human)).